The chain runs to 119 residues: MKSWTAAVLSLGLIYLSISQNEGATTEFPTMNYEGRCALDMFTLIEVGDTFNYRHACLSYTCMKRDETFYVQVHTCDAPHFENVTSGMICNFTPPTTGNFPDCCLKVNCIAHLNHTSAN.

The N-terminal stretch at 1-19 (MKSWTAAVLSLGLIYLSIS) is a signal peptide.

The protein belongs to the scoloptoxin-16 family. Contains 4 disulfide bonds. As to expression, expressed by the venom gland.

Its subcellular location is the secreted. In Ethmostigmus rubripes (Giant centipede), this protein is U-scoloptoxin(16)-Er11a.